Reading from the N-terminus, the 510-residue chain is Protein disulfide-isomerase (510 aa).

Positions 1–20 are cleaved as a signal peptide; the sequence is MLRRALLCLALTALFRAGAG. Residues 27–136 enclose the Thioredoxin 1 domain; that stretch reads HVLVLHKGNF…IVNWLKKRTG (110 aa). Catalysis depends on nucleophile residues Cys-55 and Cys-58. Cys-55 and Cys-58 are disulfide-bonded. Lys-202 carries the post-translational modification N6-acetyllysine. Lys-224 and Lys-273 each carry N6-succinyllysine. Residues Ser-333 and Ser-359 each carry the phosphoserine modification. The Thioredoxin 2 domain maps to 351-477; sequence GKIKPHLMSQ…FKKFLESGGQ (127 aa). Active-site nucleophile residues include Cys-399 and Cys-402. A disulfide bridge connects residues Cys-399 and Cys-402. Ser-429 is modified (phosphoserine). The tract at residues 473-510 is disordered; sequence ESGGQDGAGDDDDLEDLEEAEEPDLEEDDDQKAVKDEL. Residues 480 to 502 show a composition bias toward acidic residues; that stretch reads AGDDDDLEDLEEAEEPDLEEDDD. Residues 507 to 510 carry the Prevents secretion from ER motif; the sequence is KDEL.

It belongs to the protein disulfide isomerase family. As to quaternary structure, heterodimer; heterodimerizes with the protein microsomal triglyceride transfer MTTP. Homodimer. Monomers and homotetramers may also occur. Interacts with P4HA2, forming a heterotetramer consisting of 2 alpha subunits (P4HA2) and 2 beta (P4HB), where P4HB plays the role of a structural subunit; this tetramer catalyzes the formation of 4-hydroxyproline in collagen. Also constitutes the structural subunit of the microsomal triacylglycerol transfer protein MTTP in mammalian cells. Stabilizes both enzymes and retain them in the ER without contributing to the catalytic activity. Binds UBQLN1. Interacts with ERO1B. Interacts with ILDR2. Interacts with ERN1/IRE1A (via N-terminus); the interaction is enhanced by phosphorylation of P4HB by FAM20C in response to endoplasmic reticulum stress and results in attenuation of ERN1 activity. Post-translationally, phosphorylation of Ser-359 by FAM20C is induced by endoplasmic reticulum stress and results in a functional switch from oxidoreductase to molecular chaperone. It also promotes interaction with ERN1.

The protein resides in the endoplasmic reticulum. It localises to the endoplasmic reticulum lumen. It is found in the melanosome. Its subcellular location is the cell membrane. It catalyses the reaction Catalyzes the rearrangement of -S-S- bonds in proteins.. In terms of biological role, this multifunctional protein catalyzes the formation, breakage and rearrangement of disulfide bonds. At the cell surface, seems to act as a reductase that cleaves disulfide bonds of proteins attached to the cell. May therefore cause structural modifications of exofacial proteins. Inside the cell, seems to form/rearrange disulfide bonds of nascent proteins. At high concentrations and following phosphorylation by FAM20C, functions as a chaperone that inhibits aggregation of misfolded proteins. At low concentrations, facilitates aggregation (anti-chaperone activity). May be involved with other chaperones in the structural modification of the TG precursor in hormone biogenesis. Also acts as a structural subunit of various enzymes such as prolyl 4-hydroxylase and microsomal triacylglycerol transfer protein MTTP. Receptor for LGALS9; the interaction retains P4HB at the cell surface of Th2 T helper cells, increasing disulfide reductase activity at the plasma membrane, altering the plasma membrane redox state and enhancing cell migration. The sequence is that of Protein disulfide-isomerase (P4HB) from Bos taurus (Bovine).